Consider the following 225-residue polypeptide: 7-cyano-7-deazaguanine synthase (225 aa).

ATP is bound at residue 7–17; that stretch reads LSGGMDSTTLL. Zn(2+)-binding residues include C183, C191, C194, and C197.

The protein belongs to the QueC family. In terms of assembly, homodimer. Requires Zn(2+) as cofactor.

The enzyme catalyses 7-carboxy-7-deazaguanine + NH4(+) + ATP = 7-cyano-7-deazaguanine + ADP + phosphate + H2O + H(+). It participates in purine metabolism; 7-cyano-7-deazaguanine biosynthesis. Functionally, catalyzes the ATP-dependent conversion of 7-carboxy-7-deazaguanine (CDG) to 7-cyano-7-deazaguanine (preQ(0)). In Caldicellulosiruptor saccharolyticus (strain ATCC 43494 / DSM 8903 / Tp8T 6331), this protein is 7-cyano-7-deazaguanine synthase.